The primary structure comprises 510 residues: D-allose import ATP-binding protein AlsA (510 aa).

2 consecutive ABC transporter domains span residues 6-245 (ISMA…VGRE) and 260-509 (LAHE…ALPQ). 38 to 45 (GENGAGKS) contributes to the ATP binding site.

Belongs to the ABC transporter superfamily. D-allose importer (TC 3.A.1.2.6) family. In terms of assembly, the complex is composed of two ATP-binding proteins (AlsA), two transmembrane proteins (AlsC) and a solute-binding protein (AlsB).

Its subcellular location is the cell inner membrane. The catalysed reaction is D-allose(out) + ATP + H2O = D-allose(in) + ADP + phosphate + H(+). Functionally, part of the ABC transporter complex AlsBAC involved in D-allose import. Probably responsible for energy coupling to the transport system. The sequence is that of D-allose import ATP-binding protein AlsA (alsA) from Escherichia coli (strain K12).